A 326-amino-acid chain; its full sequence is Glyoxylate/hydroxypyruvate reductase B (326 aa).

Active-site residues include arginine 237 and glutamate 266. The active-site Proton donor is the histidine 285.

This sequence belongs to the D-isomer specific 2-hydroxyacid dehydrogenase family. GhrB subfamily. As to quaternary structure, homodimer.

It localises to the cytoplasm. The catalysed reaction is glycolate + NADP(+) = glyoxylate + NADPH + H(+). The enzyme catalyses (R)-glycerate + NAD(+) = 3-hydroxypyruvate + NADH + H(+). It catalyses the reaction (R)-glycerate + NADP(+) = 3-hydroxypyruvate + NADPH + H(+). In terms of biological role, catalyzes the NADPH-dependent reduction of glyoxylate and hydroxypyruvate into glycolate and glycerate, respectively. In Yersinia pestis bv. Antiqua (strain Nepal516), this protein is Glyoxylate/hydroxypyruvate reductase B.